The following is a 420-amino-acid chain: Histidine--tRNA ligase (420 aa).

The protein belongs to the class-II aminoacyl-tRNA synthetase family. As to quaternary structure, homodimer.

It is found in the cytoplasm. It catalyses the reaction tRNA(His) + L-histidine + ATP = L-histidyl-tRNA(His) + AMP + diphosphate + H(+). This Saccharopolyspora erythraea (strain ATCC 11635 / DSM 40517 / JCM 4748 / NBRC 13426 / NCIMB 8594 / NRRL 2338) protein is Histidine--tRNA ligase.